Reading from the N-terminus, the 245-residue chain is tRNA pseudouridine synthase A (245 aa).

Asp-52 functions as the Nucleophile in the catalytic mechanism. Substrate is bound at residue Tyr-111.

The protein belongs to the tRNA pseudouridine synthase TruA family. Homodimer.

The catalysed reaction is uridine(38/39/40) in tRNA = pseudouridine(38/39/40) in tRNA. Functionally, formation of pseudouridine at positions 38, 39 and 40 in the anticodon stem and loop of transfer RNAs. The chain is tRNA pseudouridine synthase A from Rhodospirillum centenum (strain ATCC 51521 / SW).